A 296-amino-acid chain; its full sequence is Nucleotide-binding protein SUB0630 (296 aa).

13–20 (GMSGAGKT) is an ATP binding site. 63 to 66 (DMRS) is a GTP binding site.

The protein belongs to the RapZ-like family.

Its function is as follows. Displays ATPase and GTPase activities. This Streptococcus uberis (strain ATCC BAA-854 / 0140J) protein is Nucleotide-binding protein SUB0630.